We begin with the raw amino-acid sequence, 542 residues long: Chaperonin GroEL 3 (542 aa).

Residues 30-33, Lys51, 87-91, Gly415, and Asp496 each bind ATP; these read TLGP and DGTTT.

It belongs to the chaperonin (HSP60) family. As to quaternary structure, forms a cylinder of 14 subunits composed of two heptameric rings stacked back-to-back. Interacts with the co-chaperonin GroES.

The protein resides in the cytoplasm. It catalyses the reaction ATP + H2O + a folded polypeptide = ADP + phosphate + an unfolded polypeptide.. Functionally, together with its co-chaperonin GroES, plays an essential role in assisting protein folding. The GroEL-GroES system forms a nano-cage that allows encapsulation of the non-native substrate proteins and provides a physical environment optimized to promote and accelerate protein folding. The polypeptide is Chaperonin GroEL 3 (Rhizobium johnstonii (strain DSM 114642 / LMG 32736 / 3841) (Rhizobium leguminosarum bv. viciae)).